A 63-amino-acid polypeptide reads, in one-letter code: Small ribosomal subunit protein eS27 (63 aa).

The Zn(2+) site is built by cysteine 18, cysteine 21, cysteine 37, and cysteine 40. The segment at 18–40 adopts a C4-type zinc-finger fold; it reads CLDCGNQQVVFDRAASYVQCIIC.

It belongs to the eukaryotic ribosomal protein eS27 family. In terms of assembly, part of the 30S ribosomal subunit. Zn(2+) serves as cofactor.

The polypeptide is Small ribosomal subunit protein eS27 (Methanothermobacter thermautotrophicus (strain ATCC 29096 / DSM 1053 / JCM 10044 / NBRC 100330 / Delta H) (Methanobacterium thermoautotrophicum)).